We begin with the raw amino-acid sequence, 104 residues long: Large ribosomal subunit protein bL21 (104 aa).

This sequence belongs to the bacterial ribosomal protein bL21 family. Part of the 50S ribosomal subunit. Contacts protein L20.

This protein binds to 23S rRNA in the presence of protein L20. The polypeptide is Large ribosomal subunit protein bL21 (Salinispora tropica (strain ATCC BAA-916 / DSM 44818 / JCM 13857 / NBRC 105044 / CNB-440)).